Consider the following 430-residue polypeptide: UDP-N-acetylmuramoylalanine--D-glutamate ligase (430 aa).

105-111 (GSNGKTT) contacts ATP.

This sequence belongs to the MurCDEF family.

Its subcellular location is the cytoplasm. It carries out the reaction UDP-N-acetyl-alpha-D-muramoyl-L-alanine + D-glutamate + ATP = UDP-N-acetyl-alpha-D-muramoyl-L-alanyl-D-glutamate + ADP + phosphate + H(+). It functions in the pathway cell wall biogenesis; peptidoglycan biosynthesis. Functionally, cell wall formation. Catalyzes the addition of glutamate to the nucleotide precursor UDP-N-acetylmuramoyl-L-alanine (UMA). The polypeptide is UDP-N-acetylmuramoylalanine--D-glutamate ligase (Pseudothermotoga lettingae (strain ATCC BAA-301 / DSM 14385 / NBRC 107922 / TMO) (Thermotoga lettingae)).